Here is a 601-residue protein sequence, read N- to C-terminus: Trehalose synthase/amylase TreS (601 aa).

A disordered region spans residues 1-21 (MNEAEHSVEHPPVQGSHVEGG). Aspartate 98 contacts substrate. Asparagine 140 contacts Ca(2+). Histidine 141 and glutamine 206 together coordinate substrate. Aspartate 208 provides a ligand contact to Ca(2+). Arginine 236 is a binding site for substrate. Aspartate 238 serves as the catalytic Nucleophile. Ca(2+) contacts are provided by tyrosine 242, leucine 243, and glutamate 245. The Proton donor role is filled by glutamate 280. Residues histidine 349 and aspartate 350 each contribute to the substrate site.

The protein belongs to the glycosyl hydrolase 13 family. TreS subfamily. As to quaternary structure, homohexamer.

The enzyme catalyses D-maltose = alpha,alpha-trehalose. It carries out the reaction Endohydrolysis of (1-&gt;4)-alpha-D-glucosidic linkages in polysaccharides containing three or more (1-&gt;4)-alpha-linked D-glucose units.. It functions in the pathway glycan biosynthesis; glycogen biosynthesis. Its pathway is capsule biogenesis; capsule polysaccharide biosynthesis. In terms of biological role, catalyzes the reversible interconversion of maltose and trehalose by transglucosylation. Also displays amylase activity, catalyzing the endohydrolysis of (1-&gt;4)-alpha-D-glucosidic linkages in glycogen and maltooligosaccharides such as maltoheptaose, to produce maltose which then can be converted to trehalose. TreS plays a key role in the utilization of trehalose for the production of glycogen and alpha-glucan via the TreS-Pep2 branch involved in the biosynthesis of maltose-1-phosphate (M1P). Might also function as a sensor and/or regulator of trehalose levels within the cell. Thus, when trehalose levels in the cell become dangerously low, TreS could expedite the conversion of glycogen to maltose via its amylase activity and then convert the maltose to trehalose; but this enzyme also could expedite or promote the conversion of trehalose to glycogen when cytoplasmic trehalose levels become too high. This Mycobacterium tuberculosis (strain CDC 1551 / Oshkosh) protein is Trehalose synthase/amylase TreS.